A 432-amino-acid chain; its full sequence is MSDKLPYKVADISLAAWGRKALDLAENEMPGLMHMREMYSASKPLKGARIAGCLHMTVETAVLIETLVALGAEVRWSSCNIFSTQDHAAAAIAKAGIPVYAWKGETDEEYLWCIEQTLYFKDGPLNMILDDGGDLTNLIHTKYPQLLSGIRGISEETTTGVHNLYKMMAKGILKVPAINVNDSVTKSKFDNLYGCRESLIDGIKRATDVMIAGKVAVVAGYGDVGKGCAQALRGFGARVIITEIDPINALQAAMEGYEVTTMDEACQEGNIFVTTTGCTDIILGQHFEQMKDDAIVCNIGHFDVEIDVKWLNENAVEKVNIKPQVDRYLLKNGRRIILLAEGRLVNLGCAMGHPSFVMSNSFTNQVLAQIELWTHPDKYPVGVHFLPKKLDEAVAEAHLGKLNVKLTKLTEKQAQYLGVSREGPFKPDHYRY.

N-acetylserine is present on S2. Positions 57, 131, and 156 each coordinate substrate. The residue at position 183 (S183) is a Phosphoserine. Residues 183-350 (SVTKSKFDNL…EGRLVNLGCA (168 aa)) form an NAD binding region. K186 and D190 together coordinate substrate. The residue at position 186 (K186) is an N6-(2-hydroxyisobutyryl)lysine. Y193 carries the phosphotyrosine modification.

This sequence belongs to the adenosylhomocysteinase family. As to quaternary structure, homotetramer. Interaction with AHCYL1. NAD(+) is required as a cofactor.

The protein resides in the cytoplasm. Its subcellular location is the melanosome. It is found in the nucleus. The protein localises to the endoplasmic reticulum. It carries out the reaction S-adenosyl-L-homocysteine + H2O = L-homocysteine + adenosine. It participates in amino-acid biosynthesis; L-homocysteine biosynthesis; L-homocysteine from S-adenosyl-L-homocysteine: step 1/1. Functionally, catalyzes the hydrolysis of S-adenosyl-L-homocysteine to form adenosine and homocysteine. Binds copper ions. In Bos taurus (Bovine), this protein is Adenosylhomocysteinase (AHCY).